The primary structure comprises 219 residues: 23.6 kDa heat shock protein, mitochondrial (219 aa).

The N-terminal 29 residues, 1-29 (MALARQCLSKRLAAGCALARPLHAASPVA), are a transit peptide targeting the mitochondrion. The region spanning 104–219 (QVAETLTRPL…KRSVTEVKVR (116 aa)) is the sHSP domain.

Belongs to the small heat shock protein (HSP20) family. As to quaternary structure, may form oligomeric structures.

Its subcellular location is the mitochondrion. This Oryza sativa subsp. japonica (Rice) protein is 23.6 kDa heat shock protein, mitochondrial (HSP23.6).